We begin with the raw amino-acid sequence, 237 residues long: Proteasome subunit alpha type-5-B (237 aa).

Met1 is modified (N-acetylmethionine). Residues Lys43, Lys66, and Lys185 each participate in a glycyl lysine isopeptide (Lys-Gly) (interchain with G-Cter in ubiquitin) cross-link.

The protein belongs to the peptidase T1A family. As to quaternary structure, component of the 20S core complex of the 26S proteasome. The 26S proteasome is composed of a core protease (CP), known as the 20S proteasome, capped at one or both ends by the 19S regulatory particle (RP/PA700). The 20S proteasome core is composed of 28 subunits that are arranged in four stacked rings, resulting in a barrel-shaped structure. The two end rings are each formed by seven alpha subunits, and the two central rings are each formed by seven beta subunits. The catalytic chamber with the active sites is on the inside of the barrel.

It localises to the cytoplasm. The protein resides in the nucleus. Its function is as follows. The proteasome is a multicatalytic proteinase complex which is characterized by its ability to cleave peptides with Arg, Phe, Tyr, Leu, and Glu adjacent to the leaving group at neutral or slightly basic pH. The proteasome has an ATP-dependent proteolytic activity. In Arabidopsis thaliana (Mouse-ear cress), this protein is Proteasome subunit alpha type-5-B (PAE2).